The primary structure comprises 301 residues: Nucleotide-binding protein MAB_2783c (301 aa).

24–31 (GLSGAGRG) is an ATP binding site. 75–78 (DVRS) serves as a coordination point for GTP.

Belongs to the RapZ-like family.

Functionally, displays ATPase and GTPase activities. In Mycobacteroides abscessus (strain ATCC 19977 / DSM 44196 / CCUG 20993 / CIP 104536 / JCM 13569 / NCTC 13031 / TMC 1543 / L948) (Mycobacterium abscessus), this protein is Nucleotide-binding protein MAB_2783c.